We begin with the raw amino-acid sequence, 149 residues long: YbbR-like domain-containing protein in def 5'region (149 aa).

Residues 1-68 (IPVEVLAQGA…LRPNRVRVVE (68 aa)) form the YbbR-like domain.

The sequence is that of YbbR-like domain-containing protein in def 5'region from Thermus thermophilus.